The sequence spans 251 residues: MLAELNAEVLENTYISGNLYRLTLRIPDKILKQIEPGHFAMIKPSDTYDPMGRRAFAVADIEEHKAVFYYDVYGKGTYLLSKRKPGERLKTFLPLGKRLFSYEGDKHLLIGGGVGLAGLTLLAKKLRDMGKKVFIAYGGRSREHLGMVEWLEKEEFPYELFTNDGSAGRKGFVTEILKEFSTDWVVHACGPKPMLKTIKEMKTGHKVYFSLEERMACGWGVCLGCVVKTRDGKFKRVCYEGPVMPMEEVIL.

In terms of domain architecture, FAD-binding FR-type spans 2–101; that stretch reads LAELNAEVLE…FLPLGKRLFS (100 aa). 4 residues coordinate [2Fe-2S] cluster: C217, C222, C225, and C238.

Belongs to the PyrK family. [2Fe-2S] cluster serves as cofactor. Requires FAD as cofactor.

The sequence is that of Dihydroorotate dehydrogenase B (NAD(+)), electron transfer subunit homolog from Aquifex aeolicus (strain VF5).